We begin with the raw amino-acid sequence, 500 residues long: Adenylosuccinate synthetase, chloroplastic (500 aa).

GTP is bound by residues 87–93 and 115–117; these read GDEGKGK and GHT. Asp88 acts as the Proton acceptor in catalysis. Mg(2+)-binding residues include Asp88 and Gly115. IMP-binding positions include 88 to 91, 113 to 116, Thr205, Arg219, Gln299, Thr314, and Arg378; these read DEGK and NAGH. The Proton donor role is filled by His116. Position 374–380 (374–380) interacts with substrate; the sequence is TTTGRPR. GTP-binding positions include Arg380, 406-408, and 489-491; these read KLD and GIG.

The protein belongs to the adenylosuccinate synthetase family. In terms of assembly, homodimer. Requires Mg(2+) as cofactor.

It localises to the plastid. The protein resides in the chloroplast. It catalyses the reaction IMP + L-aspartate + GTP = N(6)-(1,2-dicarboxyethyl)-AMP + GDP + phosphate + 2 H(+). It participates in purine metabolism; AMP biosynthesis via de novo pathway; AMP from IMP: step 1/2. Plays an important role in the de novo pathway and in the salvage pathway of purine nucleotide biosynthesis. Catalyzes the first committed step in the biosynthesis of AMP from IMP. The polypeptide is Adenylosuccinate synthetase, chloroplastic (Solanum bulbocastanum (Wild potato)).